The sequence spans 77 residues: Thioredoxin (77 aa).

Active-site nucleophile residues include cysteine 11 and cysteine 14. The cysteines at positions 11 and 14 are disulfide-linked.

The protein belongs to the glutaredoxin family.

In terms of biological role, does not function as a glutathione-disulfide oxidoreductase in the presence of glutathione and glutathione reductase. Has low thioredoxin activity in vitro. In Methanothermobacter thermautotrophicus (strain ATCC 29096 / DSM 1053 / JCM 10044 / NBRC 100330 / Delta H) (Methanobacterium thermoautotrophicum), this protein is Thioredoxin.